The chain runs to 159 residues: MDPSQFNPTYIPGSPQMLTEENSRDDSGASQISSETLIKNLSNLTINASSESVSPLSEALLRRESVGAAVLREIEDEWLYSRRGVRTLLSVQREKMARLRYMLLGGVRTHERRPTNKEPKGVKKESRPFKCPCSFCVSNGWDPSENARIGNQDTKPLQP.

Disordered regions lie at residues 1-31 and 140-159; these read MDPSQFNPTYIPGSPQMLTEENSRDDSGASQ and GWDPSENARIGNQDTKPLQP. The span at 149–159 shows a compositional bias: polar residues; sequence IGNQDTKPLQP.

In terms of tissue distribution, low expression in testis, ovary and thymus. Expressed in embryonic stem and carcinoma cells. Highly expressed in testicular germ cell tumors.

It localises to the nucleus. The protein resides in the cytoplasm. Primordial germ cell (PGCs)-specific protein involved in epigenetic chromatin reprogramming in the zygote following fertilization. In zygotes, DNA demethylation occurs selectively in the paternal pronucleus before the first cell division, while the adjacent maternal pronucleus and certain paternally-imprinted loci are protected from this process. Participates in protection of DNA methylation in the maternal pronucleus by preventing conversion of 5mC to 5hmC: specifically recognizes and binds histone H3 dimethylated at 'Lys-9' (H3K9me2) on maternal genome, and protects maternal genome from TET3-mediated conversion to 5hmC and subsequent DNA demethylation. Does not bind paternal chromatin, which is mainly packed into protamine and does not contain much H3K9me2 mark. Also protects imprinted loci that are marked with H3K9me2 in mature sperm from DNA demethylation in early embryogenesis. May be important for the totipotent/pluripotent states continuing through preimplantation development. Also involved in chromatin condensation in oocytogenesis. This is Developmental pluripotency-associated protein 3 (DPPA3) from Homo sapiens (Human).